The primary structure comprises 126 residues: Glycine cleavage system H protein (126 aa).

The Lipoyl-binding domain maps to 22–103 (KAYIGITDYA…PYGSWMALVE (82 aa)). Residue lysine 63 is modified to N6-lipoyllysine.

The protein belongs to the GcvH family. As to quaternary structure, the glycine cleavage system is composed of four proteins: P, T, L and H. (R)-lipoate is required as a cofactor.

Its function is as follows. The glycine cleavage system catalyzes the degradation of glycine. The H protein shuttles the methylamine group of glycine from the P protein to the T protein. The chain is Glycine cleavage system H protein from Thermoanaerobacter sp. (strain X514).